Here is a 285-residue protein sequence, read N- to C-terminus: NAD kinase (285 aa).

D66 serves as the catalytic Proton acceptor. NAD(+)-binding positions include 66 to 67 (DG), 137 to 138 (ND), R148, R165, D167, and 178 to 183 (TAYSLS).

Belongs to the NAD kinase family. Requires a divalent metal cation as cofactor.

The protein resides in the cytoplasm. It catalyses the reaction NAD(+) + ATP = ADP + NADP(+) + H(+). Functionally, involved in the regulation of the intracellular balance of NAD and NADP, and is a key enzyme in the biosynthesis of NADP. Catalyzes specifically the phosphorylation on 2'-hydroxyl of the adenosine moiety of NAD to yield NADP. This is NAD kinase from Chlorobium phaeobacteroides (strain BS1).